The sequence spans 274 residues: NH(3)-dependent NAD(+) synthetase (274 aa).

46-53 is a binding site for ATP; it reads GISGGQDS. Asp52 provides a ligand contact to Mg(2+). Arg140 contacts deamido-NAD(+). Thr160 is an ATP binding site. Mg(2+) is bound at residue Glu165. 2 residues coordinate deamido-NAD(+): Lys173 and Asp180. ATP is bound by residues Lys189 and Thr211. 260 to 261 is a deamido-NAD(+) binding site; it reads HK.

It belongs to the NAD synthetase family. In terms of assembly, homodimer.

It carries out the reaction deamido-NAD(+) + NH4(+) + ATP = AMP + diphosphate + NAD(+) + H(+). The protein operates within cofactor biosynthesis; NAD(+) biosynthesis; NAD(+) from deamido-NAD(+) (ammonia route): step 1/1. Functionally, catalyzes the ATP-dependent amidation of deamido-NAD to form NAD. Uses ammonia as a nitrogen source. In Streptococcus uberis (strain ATCC BAA-854 / 0140J), this protein is NH(3)-dependent NAD(+) synthetase.